Consider the following 340-residue polypeptide: COP9 signalosome complex subunit 5 (340 aa).

The 138-residue stretch at 52–189 (VRISATALIK…IGAFRTYPAD (138 aa)) folds into the MPN domain. Residues His-135, His-137, and Asp-148 each coordinate Zn(2+). Positions 135-148 (HSHPGYGCWLSGID) match the JAMM motif motif.

This sequence belongs to the peptidase M67A family. CSN5 subfamily. In terms of assembly, component of the COP9 signalosome (CSN) complex.

It is found in the cytoplasm. It localises to the nucleus. In terms of biological role, catalytic Component of the COP9 signalosome (CSN) complex that acts as an regulator of the ubiquitin (Ubl) conjugation pathway by mediating the deneddylation of the cullin subunit of SCF-type E3 ubiquitin-protein ligase complexes. The sequence is that of COP9 signalosome complex subunit 5 (RRI1) from Gibberella zeae (strain ATCC MYA-4620 / CBS 123657 / FGSC 9075 / NRRL 31084 / PH-1) (Wheat head blight fungus).